Consider the following 457-residue polypeptide: tRNA (guanine(37)-N(1))-methyltransferase (457 aa).

S-adenosyl-L-methionine is bound by residues His-240, 278-279 (DL), 306-307 (DG), and Asn-338.

It belongs to the class I-like SAM-binding methyltransferase superfamily. TRM5/TYW2 family. As to quaternary structure, monomer.

Its subcellular location is the mitochondrion matrix. It is found in the nucleus. The protein resides in the cytoplasm. It carries out the reaction guanosine(37) in tRNA + S-adenosyl-L-methionine = N(1)-methylguanosine(37) in tRNA + S-adenosyl-L-homocysteine + H(+). Specifically methylates the N1 position of guanosine-37 in various cytoplasmic and mitochondrial tRNAs. Methylation is not dependent on the nature of the nucleoside 5' of the target nucleoside. This is the first step in the biosynthesis of wybutosine (yW), a modified base adjacent to the anticodon of tRNAs and required for accurate decoding. In Drosophila melanogaster (Fruit fly), this protein is tRNA (guanine(37)-N(1))-methyltransferase.